Reading from the N-terminus, the 51-residue chain is ATP synthase subunit epsilon-like protein, mitochondrial (51 aa).

Lysine 21 is subject to N6-acetyllysine.

Belongs to the eukaryotic ATPase epsilon family. As to quaternary structure, F-type ATPases have 2 components, CF(1) - the catalytic core - and CF(0) - the membrane proton channel. CF(1) has five subunits: alpha(3), beta(3), gamma(1), delta(1), epsilon(1). CF(0) seems to have nine subunits: a, b, c, d, e, f, g, F6 and 8 (or A6L).

It localises to the mitochondrion inner membrane. Functionally, mitochondrial membrane ATP synthase (F(1)F(0) ATP synthase or Complex V) produces ATP from ADP in the presence of a proton gradient across the membrane which is generated by electron transport complexes of the respiratory chain. F-type ATPases consist of two structural domains, F(1) - containing the extramembraneous catalytic core, and F(0) - containing the membrane proton channel, linked together by a central stalk and a peripheral stalk. During catalysis, ATP synthesis in the catalytic domain of F(1) is coupled via a rotary mechanism of the central stalk subunits to proton translocation. Part of the complex F(1) domain and of the central stalk which is part of the complex rotary element. Rotation of the central stalk against the surrounding alpha(3)beta(3) subunits leads to hydrolysis of ATP in three separate catalytic sites on the beta subunits. This is ATP synthase subunit epsilon-like protein, mitochondrial from Homo sapiens (Human).